The following is a 128-amino-acid chain: Protein BEX1 (128 aa).

The segment at 1 to 55 is disordered; that stretch reads MESKDQGAKNLNMENDHQKKEEKEEKPQDTIKREPVVAPTFEAGKNCAPRGGRRR. Residues 14-35 are compositionally biased toward basic and acidic residues; it reads ENDHQKKEEKEEKPQDTIKREP. Residue Ser-105 is modified to Phosphoserine; by PKB/AKT1. Positions 107–128 are disordered; sequence SLRAVSTDPPHHDHHDEFCLMP. A compositionally biased stretch (basic and acidic residues) spans 115–128; that stretch reads PPHHDHHDEFCLMP. The segment at 117–121 is his cluster; that stretch reads HHDHH. Zn(2+) is bound at residue Cys-125.

This sequence belongs to the BEX family. Interacts with neurotrophin receptor p75NTR/NGFR. Interacts with OMP. Phosphorylated. Phosphorylation of Ser-105 protects it from the proteasome. Post-translationally, ubiquitinated. Degraded by the proteasome. In terms of tissue distribution, expressed in the central nervous system. Expressed in Schwann cells from newborn sciatic nerve.

The protein localises to the nucleus. It localises to the cytoplasm. Its function is as follows. Signaling adapter molecule involved in p75NTR/NGFR signaling. Plays a role in cell cycle progression and neuronal differentiation. Inhibits neuronal differentiation in response to nerve growth factor (NGF). May act as a link between the cell cycle and neurotrophic factor signaling, possibly by functioning as an upstream modulator of receptor signaling, coordinating biological responses to external signals with internal cellular states. In absence of reductive stress, acts as a pseudosubstrate for the CRL2(FEM1B) complex: associates with FEM1B via zinc, thereby preventing association between FEM1B and its substrates. This is Protein BEX1 (Bex1) from Rattus norvegicus (Rat).